The chain runs to 409 residues: Dual-specificity RNA methyltransferase RlmN (409 aa).

The active-site Proton acceptor is Glu-121. The 250-residue stretch at 127-376 (EEGRGTLCIS…IRTPRGRDIL (250 aa)) folds into the Radical SAM core domain. The cysteines at positions 134 and 379 are disulfide-linked. Residues Cys-141, Cys-145, and Cys-148 each contribute to the [4Fe-4S] cluster site. S-adenosyl-L-methionine is bound by residues 205 to 206 (GE), Ser-237, 259 to 261 (SLH), and Asn-336. Residue Cys-379 is the S-methylcysteine intermediate of the active site.

This sequence belongs to the radical SAM superfamily. RlmN family. [4Fe-4S] cluster is required as a cofactor.

Its subcellular location is the cytoplasm. It catalyses the reaction adenosine(2503) in 23S rRNA + 2 reduced [2Fe-2S]-[ferredoxin] + 2 S-adenosyl-L-methionine = 2-methyladenosine(2503) in 23S rRNA + 5'-deoxyadenosine + L-methionine + 2 oxidized [2Fe-2S]-[ferredoxin] + S-adenosyl-L-homocysteine. The catalysed reaction is adenosine(37) in tRNA + 2 reduced [2Fe-2S]-[ferredoxin] + 2 S-adenosyl-L-methionine = 2-methyladenosine(37) in tRNA + 5'-deoxyadenosine + L-methionine + 2 oxidized [2Fe-2S]-[ferredoxin] + S-adenosyl-L-homocysteine. Specifically methylates position 2 of adenine 2503 in 23S rRNA and position 2 of adenine 37 in tRNAs. m2A2503 modification seems to play a crucial role in the proofreading step occurring at the peptidyl transferase center and thus would serve to optimize ribosomal fidelity. The polypeptide is Dual-specificity RNA methyltransferase RlmN (Agrobacterium fabrum (strain C58 / ATCC 33970) (Agrobacterium tumefaciens (strain C58))).